Here is a 149-residue protein sequence, read N- to C-terminus: Cytochrome c-type biogenesis protein CcmE (149 aa).

Over 1–7 (MKPRHKK) the chain is Cytoplasmic. The helical; Signal-anchor for type II membrane protein transmembrane segment at 8-28 (MAVIALSVSALTVAVVLVLNA) threads the bilayer. The Periplasmic portion of the chain corresponds to 29-149 (FQSNLVFFFS…AKAQKTSLAQ (121 aa)). 2 residues coordinate heme: H123 and Y127.

It belongs to the CcmE/CycJ family.

It localises to the cell inner membrane. Its function is as follows. Heme chaperone required for the biogenesis of c-type cytochromes. Transiently binds heme delivered by CcmC and transfers the heme to apo-cytochromes in a process facilitated by CcmF and CcmH. This chain is Cytochrome c-type biogenesis protein CcmE, found in Nitrosomonas europaea (strain ATCC 19718 / CIP 103999 / KCTC 2705 / NBRC 14298).